Consider the following 74-residue polypeptide: MRWLSRTVKCWVPLILAPLHRMSPLSVALATELILGCQLSSLGCLQLPLITRSTNFVGSASLLSRWFLPIIAEE.

This is an uncharacterized protein from Avena sativa (Oat).